Consider the following 256-residue polypeptide: Na(+)-translocating NADH-quinone reductase subunit C (256 aa).

Residues 12 to 32 (LGVVIGLSLVCSIIVSTAAVG) traverse the membrane as a helical segment. T224 bears the FMN phosphoryl threonine mark.

Belongs to the NqrC family. In terms of assembly, composed of six subunits; NqrA, NqrB, NqrC, NqrD, NqrE and NqrF. FMN is required as a cofactor.

The protein localises to the cell inner membrane. It catalyses the reaction a ubiquinone + n Na(+)(in) + NADH + H(+) = a ubiquinol + n Na(+)(out) + NAD(+). With respect to regulation, this reaction is tightly coupled to the Na(+) pumping activity and specifically requires Na(+) for activity. Inhibited by korormicin and 2-N-heptyl-4-hydroxyquinoline N-oxide (HQNO). NQR complex catalyzes the reduction of ubiquinone-1 to ubiquinol by two successive reactions, coupled with the transport of Na(+) ions from the cytoplasm to the periplasm. NqrA to NqrE are probably involved in the second step, the conversion of ubisemiquinone to ubiquinol. The sequence is that of Na(+)-translocating NADH-quinone reductase subunit C from Vibrio alginolyticus.